Consider the following 151-residue polypeptide: SsrA-binding protein (151 aa).

The protein belongs to the SmpB family.

The protein resides in the cytoplasm. Functionally, required for rescue of stalled ribosomes mediated by trans-translation. Binds to transfer-messenger RNA (tmRNA), required for stable association of tmRNA with ribosomes. tmRNA and SmpB together mimic tRNA shape, replacing the anticodon stem-loop with SmpB. tmRNA is encoded by the ssrA gene; the 2 termini fold to resemble tRNA(Ala) and it encodes a 'tag peptide', a short internal open reading frame. During trans-translation Ala-aminoacylated tmRNA acts like a tRNA, entering the A-site of stalled ribosomes, displacing the stalled mRNA. The ribosome then switches to translate the ORF on the tmRNA; the nascent peptide is terminated with the 'tag peptide' encoded by the tmRNA and targeted for degradation. The ribosome is freed to recommence translation, which seems to be the essential function of trans-translation. This is SsrA-binding protein from Campylobacter fetus subsp. fetus (strain 82-40).